A 397-amino-acid chain; its full sequence is Iron-sulfur cluster assembly SufBD family protein Rv1462 (397 aa).

T2 is modified (N-acetylthreonine).

It belongs to the iron-sulfur cluster assembly SufBD family.

The protein is Iron-sulfur cluster assembly SufBD family protein Rv1462 of Mycobacterium tuberculosis (strain ATCC 25618 / H37Rv).